Reading from the N-terminus, the 1389-residue chain is Carboxypeptidase D (1389 aa).

The first 25 residues, 1 to 25, serve as a signal peptide directing secretion; sequence MAGAARGLLWAALSLCLLPEPLRAA. Residues 26 to 1308 lie on the Extracellular side of the membrane; that stretch reads HIKKAEAAAA…ENRIFGLPRE (1283 aa). Residues 46–383 enclose the Peptidase M14 1 domain; that stretch reads RYLHAAELGQ…ESLLTFIEKV (338 aa). The interval 95–133 is disordered; sequence LPEARQDGEKKKKEEEEEEEEEEGEEGGGGALPGRPQVK. The segment covering 96–108 has biased composition (basic and acidic residues); the sequence is PEARQDGEKKKKE. The span at 109–120 shows a compositional bias: acidic residues; sequence EEEEEEEEEGEE. Zn(2+) contacts are provided by His139 and Glu142. N-linked (GlcNAc...) asparagine glycosylation occurs at Asn172. The disordered stretch occupies residues 188-235; the sequence is ERAREGDCGGGGGGGGEGGGEPGGRENSRGRDLNRSFPDQFGSAQPDL. The span at 195-209 shows a compositional bias: gly residues; the sequence is CGGGGGGGGEGGGEP. Basic and acidic residues predominate over residues 210-221; sequence GGRENSRGRDLN. The N-linked (GlcNAc...) asparagine glycan is linked to Asn221. A Zn(2+)-binding site is contributed by His260. Glu353 acts as the Proton donor/acceptor in catalysis. 4 N-linked (GlcNAc...) asparagine glycosylation sites follow: Asn402, Asn413, Asn432, and Asn472. The Peptidase M14 2 domain occupies 511–801; sequence RHHHFSDMEI…RSLLQFIKQV (291 aa). Zn(2+)-binding residues include His573 and Glu576. Residues 614-639 form a disordered region; that stretch reads SMNPDGYEKSQEGDRGGTVGRNNSNN. A compositionally biased stretch (basic and acidic residues) spans 619–628; sequence GYEKSQEGDR. An N-linked (GlcNAc...) asparagine glycan is attached at Asn635. His680 lines the Zn(2+) pocket. Glu771 acts as the Proton donor/acceptor in catalysis. Asn820, Asn876, Asn958, Asn981, Asn1073, and Asn1151 each carry an N-linked (GlcNAc...) asparagine glycan. In terms of domain architecture, Peptidase M14 3 spans 935-1220; sequence RYRPYKDLSE…KSLLSMLVEV (286 aa). The helical transmembrane segment at 1309-1329 threads the bilayer; sequence LVVTVAGASMSALVLTACIIW. Residues Cys1326, Cys1330, and Cys1332 are each lipidated (S-palmitoyl cysteine). At 1330-1389 the chain is on the cytoplasmic side; that stretch reads CVCSIKSNRHKDGFPTLRQHHDDYEDEIRMMSTGSKKSLLSHEFQDETDTEEETLYSSKH. A disordered region spans residues 1367-1389; sequence SLLSHEFQDETDTEEETLYSSKH.

Belongs to the peptidase M14 family. As to quaternary structure, binds to pre-S, hepatitis B virus large envelope protein, via the carboxypeptidase-like domain. The cofactor is Zn(2+). Post-translationally, the N-terminus is blocked. As to expression, expressed in liver, lung, kidney, heart, stomach, pancreas, spleen, gall bladder and intestine, but not in skeletal muscle.

The protein localises to the cell membrane. The catalysed reaction is Releases C-terminal Arg and Lys from polypeptides.. This is Carboxypeptidase D (CPD) from Anas platyrhynchos (Mallard).